We begin with the raw amino-acid sequence, 890 residues long: DNA mismatch repair protein MutS (890 aa).

Gly607–Ser614 lines the ATP pocket.

This sequence belongs to the DNA mismatch repair MutS family.

Functionally, this protein is involved in the repair of mismatches in DNA. It is possible that it carries out the mismatch recognition step. This protein has a weak ATPase activity. The protein is DNA mismatch repair protein MutS of Bacillus thuringiensis (strain Al Hakam).